A 465-amino-acid chain; its full sequence is MSNNIGKVVQVIGPVVDIKFANDELPNIFNAIHIKMDDGKILVCEVEQHVGDDIVRTIAMEATEGLRRGVEAVDTGAPISVPVGECVLGRIFNVLGKPLDSGAEVNNEEKYPIHRPAPSFEEQSVVPQMFETGIKVIDLLAPYQRGGKIGLFGGAGVGKTVLIQELINNIAKEHGGLSVFTGVGERSREGNDLYYEMMESGVIKNTALVFGQMNEPPGARMRVALTGLTMAEYFRDQGQDVLLFIDNIFRFSQAGSEVSALLGRIPSAVGYQPTLATEMGALQERITSTTHGSITSVQAVYVPADDLTDPAPATTFNHLDAKTVLSRSIAEIGIYPAVDPLDSSSRILDPRVVGEEHYEVASKVKHILERYKELQDIIAILGVDELADEDKLIVARARRIQKFLSQPFTVAEQFTGMQGRYVPIKETIRGFKEILEGKHDNVPESAFLFVGTIEEVLEKARTMAQ.

Glycine 153 to threonine 160 serves as a coordination point for ATP.

Belongs to the ATPase alpha/beta chains family. F-type ATPases have 2 components, CF(1) - the catalytic core - and CF(0) - the membrane proton channel. CF(1) has five subunits: alpha(3), beta(3), gamma(1), delta(1), epsilon(1). CF(0) has three main subunits: a(1), b(2) and c(9-12). The alpha and beta chains form an alternating ring which encloses part of the gamma chain. CF(1) is attached to CF(0) by a central stalk formed by the gamma and epsilon chains, while a peripheral stalk is formed by the delta and b chains.

It is found in the cell membrane. It catalyses the reaction ATP + H2O + 4 H(+)(in) = ADP + phosphate + 5 H(+)(out). Functionally, produces ATP from ADP in the presence of a proton gradient across the membrane. The catalytic sites are hosted primarily by the beta subunits. This chain is ATP synthase subunit beta, found in Clostridium perfringens (strain SM101 / Type A).